A 737-amino-acid polypeptide reads, in one-letter code: Alpha-adducin (737 aa).

At Met-1 the chain carries N-acetylmethionine. The segment at Met-1 to Lys-21 is disordered. Ser-12 is subject to Phosphoserine. Phosphoserine; by PKA is present on Ser-59. The residue at position 64 (Ser-64) is a Phosphoserine. At Thr-331 the chain carries Phosphothreonine. Ser-334, Ser-353, Ser-355, Ser-358, and Ser-366 each carry phosphoserine. Ser-408 is modified (phosphoserine; by PKA). Disordered stretches follow at residues Phe-421–Pro-486 and Arg-576–Ser-737. Ser-427 is modified (phosphoserine). Residue Thr-429 is modified to Phosphothreonine. Residue Ser-431 is modified to Phosphoserine. The residue at position 436 (Ser-436) is a Phosphoserine; by PKA. Residue Thr-445 is modified to Phosphothreonine; by ROCK2. Phosphoserine is present on residues Ser-464 and Ser-465. Position 480 is a phosphothreonine; by ROCK2 (Thr-480). A Phosphoserine; by PKA modification is found at Ser-481. Positions Arg-576–Pro-601 are enriched in basic and acidic residues. Residues Ser-586, Ser-600, and Ser-613 each carry the phosphoserine modification. Residues Pro-602–Thr-614 show a composition bias toward pro residues. Residue Thr-614 is modified to Phosphothreonine. Ser-678, Ser-707, Ser-710, and Ser-714 each carry phosphoserine. Positions Pro-687–Ser-714 are enriched in low complexity. Positions Pro-715–Ser-737 are enriched in basic residues. Position 716 is a phosphoserine; by PKC (Ser-716). Residues Lys-717–Lys-734 form an interaction with calmodulin region. Ser-726 is subject to Phosphoserine; by PKA and PKC.

This sequence belongs to the aldolase class II family. Adducin subfamily. As to quaternary structure, heterodimer of an alpha and a beta subunit or an alpha and a gamma subunit. As to expression, expressed in all tissues. Found in much higher levels in reticulocytes than the beta subunit.

The protein localises to the cytoplasm. It localises to the cytoskeleton. The protein resides in the cell membrane. In terms of biological role, membrane-cytoskeleton-associated protein that promotes the assembly of the spectrin-actin network. Binds to calmodulin. The protein is Alpha-adducin (ADD1) of Homo sapiens (Human).